The primary structure comprises 193 residues: Fe/S biogenesis protein NfuA (193 aa).

Residues cysteine 151 and cysteine 154 each contribute to the [4Fe-4S] cluster site.

It belongs to the NfuA family. As to quaternary structure, homodimer. [4Fe-4S] cluster serves as cofactor.

Involved in iron-sulfur cluster biogenesis. Binds a 4Fe-4S cluster, can transfer this cluster to apoproteins, and thereby intervenes in the maturation of Fe/S proteins. Could also act as a scaffold/chaperone for damaged Fe/S proteins. The sequence is that of Fe/S biogenesis protein NfuA from Buchnera aphidicola subsp. Cinara cedri (strain Cc).